Consider the following 123-residue polypeptide: Ribonuclease P protein component (123 aa).

This sequence belongs to the RnpA family. Consists of a catalytic RNA component (M1 or rnpB) and a protein subunit.

It catalyses the reaction Endonucleolytic cleavage of RNA, removing 5'-extranucleotides from tRNA precursor.. Functionally, RNaseP catalyzes the removal of the 5'-leader sequence from pre-tRNA to produce the mature 5'-terminus. It can also cleave other RNA substrates such as 4.5S RNA. The protein component plays an auxiliary but essential role in vivo by binding to the 5'-leader sequence and broadening the substrate specificity of the ribozyme. The protein is Ribonuclease P protein component of Streptomyces bikiniensis.